Consider the following 285-residue polypeptide: Golgi phosphoprotein 3-like (285 aa).

The tract at residues 1–43 (MTTLTHRTRRTEVSKSCEKKIESEEDTNQERSPDNEDPGDSKD) is disordered. A compositionally biased stretch (basic and acidic residues) spans 10–43 (RTEVSKSCEKKIESEEDTNQERSPDNEDPGDSKD). Positions 67 and 76 each coordinate a 1,2-diacyl-sn-glycero-3-phospho-(1D-myo-inositol 4-phosphate). At Ser-112 the chain carries Phosphoserine. Positions 157 and 160 each coordinate a 1,2-diacyl-sn-glycero-3-phospho-(1D-myo-inositol 4-phosphate). The beta-hairpin required for oligomerization stretch occupies residues 176 to 187 (EKQNFLLFDMTT).

This sequence belongs to the GOLPH3/VPS74 family. In terms of assembly, homooligomer. Does not interact MYO18; differs from GOLPH3 by its inability to interact with MYO18. May interact with ARF1.

It localises to the golgi apparatus. It is found in the golgi stack membrane. The protein localises to the trans-Golgi network membrane. Phosphatidylinositol-4-phosphate-binding protein that may antagonize the action of GOLPH3 which is required for the process of vesicle budding at the Golgi and anterograde transport to the plasma membrane. In Rattus norvegicus (Rat), this protein is Golgi phosphoprotein 3-like (Golph3l).